Consider the following 177-residue polypeptide: Large ribosomal subunit protein uL6 (177 aa).

Belongs to the universal ribosomal protein uL6 family. Part of the 50S ribosomal subunit.

In terms of biological role, this protein binds to the 23S rRNA, and is important in its secondary structure. It is located near the subunit interface in the base of the L7/L12 stalk, and near the tRNA binding site of the peptidyltransferase center. In Idiomarina loihiensis (strain ATCC BAA-735 / DSM 15497 / L2-TR), this protein is Large ribosomal subunit protein uL6.